A 172-amino-acid chain; its full sequence is Ribosome maturation factor RimM (172 aa).

The region spanning 96–168 (DGEFYYHEII…RVDVEIPEGL (73 aa)) is the PRC barrel domain.

It belongs to the RimM family. Binds ribosomal protein uS19.

Its subcellular location is the cytoplasm. An accessory protein needed during the final step in the assembly of 30S ribosomal subunit, possibly for assembly of the head region. Essential for efficient processing of 16S rRNA. May be needed both before and after RbfA during the maturation of 16S rRNA. It has affinity for free ribosomal 30S subunits but not for 70S ribosomes. The chain is Ribosome maturation factor RimM from Streptococcus sanguinis (strain SK36).